The following is a 606-amino-acid chain: Prostaglandin G/H synthase 1 (606 aa).

The signal sequence occupies residues methionine 1 to proline 30. The 39-residue stretch at proline 38–threonine 76 folds into the EGF-like domain. Disulfide bonds link cysteine 42-cysteine 53, cysteine 43-cysteine 165, cysteine 47-cysteine 63, and cysteine 65-cysteine 75. Asparagine 74, asparagine 110, and asparagine 150 each carry an N-linked (GlcNAc...) asparagine glycan. Histidine 213 serves as the catalytic Proton acceptor. Catalysis depends on tyrosine 391, which acts as the For cyclooxygenase activity. Histidine 394 contributes to the heme b binding site. Asparagine 416 is a glycosylation site (N-linked (GlcNAc...) asparagine). A disulfide bond links cysteine 575 and cysteine 581.

This sequence belongs to the prostaglandin G/H synthase family. Homodimer. Requires heme b as cofactor.

It is found in the microsome membrane. Its subcellular location is the endoplasmic reticulum membrane. It carries out the reaction (5Z,8Z,11Z,14Z)-eicosatetraenoate + AH2 + 2 O2 = prostaglandin H2 + A + H2O. The enzyme catalyses (5Z,8Z,11Z,14Z)-eicosatetraenoate + 2 O2 = prostaglandin G2. The catalysed reaction is prostaglandin G2 + AH2 = prostaglandin H2 + A + H2O. It catalyses the reaction (9Z,12Z)-octadecadienoate + AH2 + O2 = (9R)-hydroxy-(10E,12Z)-octadecadienoate + A + H2O. It carries out the reaction (9Z,12Z)-octadecadienoate + AH2 + O2 = (9S)-hydroxy-(10E,12Z)-octadecadienoate + A + H2O. The enzyme catalyses (9Z,12Z)-octadecadienoate + AH2 + O2 = (13S)-hydroxy-(9Z,11E)-octadecadienoate + A + H2O. The catalysed reaction is (9Z,12Z)-octadecadienoate + AH2 + O2 = (13R)-hydroxy-(9Z,11E)-octadecadienoate + A + H2O. It participates in lipid metabolism; prostaglandin biosynthesis. With respect to regulation, the cyclooxygenase activity is inhibited by nonsteroidal anti-inflammatory drugs (NSAIDs) including ibuprofen, flurbiprofen, ketoprofen, naproxen, flurbiprofen, anirolac, fenclofenac and diclofenac. Dual cyclooxygenase and peroxidase that plays an important role in the biosynthesis pathway of prostanoids, a class of C20 oxylipins mainly derived from arachidonate ((5Z,8Z,11Z,14Z)-eicosatetraenoate, AA, C20:4(n-6)), with a particular role in the inflammatory response. The cyclooxygenase activity oxygenates AA to the hydroperoxy endoperoxide prostaglandin G2 (PGG2), and the peroxidase activity reduces PGG2 to the hydroxy endoperoxide prostaglandin H2 (PGH2), the precursor of all 2-series prostaglandins and thromboxanes. This complex transformation is initiated by abstraction of hydrogen at carbon 13 (with S-stereochemistry), followed by insertion of molecular O2 to form the endoperoxide bridge between carbon 9 and 11 that defines prostaglandins. The insertion of a second molecule of O2 (bis-oxygenase activity) yields a hydroperoxy group in PGG2 that is then reduced to PGH2 by two electrons. Involved in the constitutive production of prostanoids in particular in the stomach and platelets. In gastric epithelial cells, it is a key step in the generation of prostaglandins, such as prostaglandin E2 (PGE2), which plays an important role in cytoprotection. In platelets, it is involved in the generation of thromboxane A2 (TXA2), which promotes platelet activation and aggregation, vasoconstriction and proliferation of vascular smooth muscle cells. Can also use linoleate (LA, (9Z,12Z)-octadecadienoate, C18:2(n-6)) as substrate and produce hydroxyoctadecadienoates (HODEs) in a regio- and stereospecific manner, being (9R)-HODE ((9R)-hydroxy-(10E,12Z)-octadecadienoate) and (13S)-HODE ((13S)-hydroxy-(9Z,11E)-octadecadienoate) its major products. In Oryctolagus cuniculus (Rabbit), this protein is Prostaglandin G/H synthase 1 (PTGS1).